Consider the following 500-residue polypeptide: Neuronal pentraxin receptor (500 aa).

Residues methionine 1 to lysine 2 are Cytoplasmic-facing. A helical; Signal-anchor for type II membrane protein membrane pass occupies residues phenylalanine 3–isoleucine 23. Residues alanine 24–alanine 500 are Extracellular-facing. Asparagine 42 carries N-linked (GlcNAc...) asparagine glycosylation. The span at asparagine 42–histidine 63 shows a compositional bias: low complexity. Disordered regions lie at residues asparagine 42–serine 81 and glutamate 162–proline 183. The N-linked (GlcNAc...) asparagine glycan is linked to asparagine 216. The Pentraxin (PTX) domain maps to aspartate 292 to cysteine 494. A disulfide bridge connects residues cysteine 322 and cysteine 383. Asparagine 347, glutamate 425, glutamine 426, aspartate 427, and glutamine 437 together coordinate Ca(2+). The N-linked (GlcNAc...) asparagine glycan is linked to asparagine 463.

As to quaternary structure, heteropentamer with NPTX1 and/or NPTX2. Also binds taipoxin-associated calcium-binding protein 49 (TCBP49/RCN2). Interacts with KLHL2. The cofactor is Ca(2+). Ubiquitinated by a cullin-RING-based BCR (BTB-CUL3-RBX1) E3 ubiquitin-protein ligase complex containing KLHL2.

The protein resides in the membrane. Its function is as follows. May be involved in mediating uptake of synaptic material during synapse remodeling or in mediating the synaptic clustering of AMPA glutamate receptors at a subset of excitatory synapses. The sequence is that of Neuronal pentraxin receptor (NPTXR) from Homo sapiens (Human).